A 95-amino-acid polypeptide reads, in one-letter code: Homeotic protein bicoid (95 aa).

Disordered regions lie at residues 1 to 29 (NLEP…STGM) and 42 to 63 (GKPS…MMHD).

It belongs to the paired homeobox family. Bicoid subfamily.

It localises to the nucleus. Bicoid is polarity protein that provides positional cues for the development of head and thoracic segments. BCD regulates the expression of zygotic genes, possibly through its homeodomain, and inhibits the activity of other maternal gene products. This is Homeotic protein bicoid (bcd) from Drosophila subobscura (Fruit fly).